Consider the following 117-residue polypeptide: Immunoglobulin heavy variable 1-2 (117 aa).

Residues 1–19 (MDWTWRILFLVAAATGAHS) form the signal peptide. Gln-20 carries the post-translational modification Pyrrolidone carboxylic acid. The interval 20 to 44 (QVQLVQSGAEVKKPGASVKVSCKAS) is framework-1. Residues 20-117 (QVQLVQSGAE…DDTAVYYCAR (98 aa)) form the Ig-like domain. A disulfide bond links Cys-41 and Cys-115. Residues 45 to 52 (GYTFTGYY) form a complementarity-determining-1 region. The tract at residues 53-69 (MHWVRQAPGQGLEWMGW) is framework-2. Residues 70–77 (INPNSGGT) are complementarity-determining-2. A framework-3 region spans residues 78-115 (NYAQKFQGWVTMTRDTSISTAYMELSRLRSDDTAVYYC). The complementarity-determining-3 stretch occupies residues 116 to 117 (AR).

As to quaternary structure, immunoglobulins are composed of two identical heavy chains and two identical light chains; disulfide-linked.

The protein resides in the secreted. It localises to the cell membrane. Functionally, v region of the variable domain of immunoglobulin heavy chains that participates in the antigen recognition. Immunoglobulins, also known as antibodies, are membrane-bound or secreted glycoproteins produced by B lymphocytes. In the recognition phase of humoral immunity, the membrane-bound immunoglobulins serve as receptors which, upon binding of a specific antigen, trigger the clonal expansion and differentiation of B lymphocytes into immunoglobulins-secreting plasma cells. Secreted immunoglobulins mediate the effector phase of humoral immunity, which results in the elimination of bound antigens. The antigen binding site is formed by the variable domain of one heavy chain, together with that of its associated light chain. Thus, each immunoglobulin has two antigen binding sites with remarkable affinity for a particular antigen. The variable domains are assembled by a process called V-(D)-J rearrangement and can then be subjected to somatic hypermutations which, after exposure to antigen and selection, allow affinity maturation for a particular antigen. This Homo sapiens (Human) protein is Immunoglobulin heavy variable 1-2.